The following is a 245-amino-acid chain: tRNA (guanine-N(1)-)-methyltransferase (245 aa).

S-adenosyl-L-methionine-binding positions include Gly111 and 131 to 136; that span reads IGDYVL.

Belongs to the RNA methyltransferase TrmD family. As to quaternary structure, homodimer.

Its subcellular location is the cytoplasm. The enzyme catalyses guanosine(37) in tRNA + S-adenosyl-L-methionine = N(1)-methylguanosine(37) in tRNA + S-adenosyl-L-homocysteine + H(+). Specifically methylates guanosine-37 in various tRNAs. This Staphylococcus carnosus (strain TM300) protein is tRNA (guanine-N(1)-)-methyltransferase.